The chain runs to 391 residues: Formate-dependent phosphoribosylglycinamide formyltransferase (391 aa).

N(1)-(5-phospho-beta-D-ribosyl)glycinamide-binding positions include 20-21 (EL) and E80. Residues R112, K153, 158–163 (SSGKGQ), 193–196 (EGFV), and E201 each bind ATP. Residues 117–306 (RLAAETLGLP…EFALHVRAIL (190 aa)) enclose the ATP-grasp domain. 2 residues coordinate Mg(2+): E265 and E277. N(1)-(5-phospho-beta-D-ribosyl)glycinamide-binding positions include D284, K354, and 361–362 (RR).

It belongs to the PurK/PurT family. Homodimer.

It catalyses the reaction N(1)-(5-phospho-beta-D-ribosyl)glycinamide + formate + ATP = N(2)-formyl-N(1)-(5-phospho-beta-D-ribosyl)glycinamide + ADP + phosphate + H(+). Its pathway is purine metabolism; IMP biosynthesis via de novo pathway; N(2)-formyl-N(1)-(5-phospho-D-ribosyl)glycinamide from N(1)-(5-phospho-D-ribosyl)glycinamide (formate route): step 1/1. Functionally, involved in the de novo purine biosynthesis. Catalyzes the transfer of formate to 5-phospho-ribosyl-glycinamide (GAR), producing 5-phospho-ribosyl-N-formylglycinamide (FGAR). Formate is provided by PurU via hydrolysis of 10-formyl-tetrahydrofolate. The chain is Formate-dependent phosphoribosylglycinamide formyltransferase from Shewanella putrefaciens (strain CN-32 / ATCC BAA-453).